Reading from the N-terminus, the 495-residue chain is Internal alternative NAD(P)H-ubiquinone oxidoreductase A1, mitochondrial (495 aa).

The N-terminal 41 residues, 1–41 (MPWFKNLIKISKTITNQSSSYKSITPLASPLLAQFLQFTKQ), are a transit peptide targeting the mitochondrion. 61-91 (RIVVLGSGWAGCRLMKDIDTNIYDVVCVSPR) contacts FAD. Residue 228-264 (LHCVVVGGGPTGVEFSGELSDFILKDVHQRYAHVKDY) participates in NAD(+) binding. Positions 486 to 495 (LVFGRDISRI) match the Microbody targeting signal motif.

This sequence belongs to the NADH dehydrogenase family. FAD is required as a cofactor.

It is found in the mitochondrion inner membrane. The protein localises to the peroxisome. The catalysed reaction is a quinone + NADH + H(+) = a quinol + NAD(+). The enzyme catalyses a ubiquinone + NADH + H(+) = a ubiquinol + NAD(+). Functionally, alternative NADH-ubiquinone oxidoreductase which catalyzes the oxidation of mitochondrial NADH does not translocate protons across the inner mitochondrial membrane. This chain is Internal alternative NAD(P)H-ubiquinone oxidoreductase A1, mitochondrial (NDA1), found in Solanum tuberosum (Potato).